Consider the following 352-residue polypeptide: Rhodopsin, freshwater form (352 aa).

At 1–36 the chain is on the extracellular side; it reads MNGTEGPNFYVPMSNVTGVVRSPFEYPQYYLAEPWA. N-linked (GlcNAc...) asparagine glycans are attached at residues asparagine 2 and asparagine 15. A helical membrane pass occupies residues 37-61; sequence YSALAAYMFFLIIAGFPINFLTLYV. Topologically, residues 62 to 73 are cytoplasmic; the sequence is TIEHKKLRTPLN. A helical membrane pass occupies residues 74–98; sequence YILLNLAVADLFMVFGGFTTTMYTS. Residues 99–113 are Extracellular-facing; sequence MHGYFVFGPTGCNIE. A disulfide bond links cysteine 110 and cysteine 187. The chain crosses the membrane as a helical span at residues 114–133; it reads GFFATLGGEIALWCLVVLAV. At 134-152 the chain is on the cytoplasmic side; it reads ERWMVVCKPMSNFRFGENH. A helical membrane pass occupies residues 153–176; that stretch reads AIMGVAFTWVMALACAAPPLFGWS. The Extracellular segment spans residues 177-202; the sequence is RYIPEGMQCSCGMDHYAPNPETYNES. Residue asparagine 200 is glycosylated (N-linked (GlcNAc...) asparagine). A helical transmembrane segment spans residues 203–230; sequence FVIYMFICHFTIPLTVISFCYGRLVCTV. The Cytoplasmic segment spans residues 231–252; the sequence is KEATAQQQESETTQRAEREVTR. The chain crosses the membrane as a helical span at residues 253–276; the sequence is MVIIMVISFLVCWVPYASVAWYIF. Residues 277–284 are Extracellular-facing; that stretch reads THQGSSFG. A helical transmembrane segment spans residues 285–309; the sequence is PIFMTIPAFFAKSSSLYNPLIYICM. Position 296 is an N6-(retinylidene)lysine (lysine 296). The Cytoplasmic segment spans residues 310 to 352; the sequence is NKQSRNCMITTLCCGKNPFEEEEGASTTASKTEASSVSSVSPA. Cysteine 323 carries the S-palmitoyl cysteine lipid modification. The disordered stretch occupies residues 330-352; sequence EEEGASTTASKTEASSVSSVSPA. Low complexity predominate over residues 334-352; the sequence is ASTTASKTEASSVSSVSPA.

It belongs to the G-protein coupled receptor 1 family. Opsin subfamily. In terms of processing, phosphorylated on some or all of the serine and threonine residues present in the C-terminal region. As to expression, rod shaped photoreceptor cells which mediates vision in dim light.

It is found in the membrane. Functionally, visual pigments such as rhodopsin and porphyropsin are light-absorbing molecules that mediate vision. Rhodopsin consists of an apoprotein, opsin, covalently linked to 11-cis-retinal. This receptor is coupled to the activation of phospholipase C. Porphyropsin consists of opsin covalently linked to 11-cis 3,4-didehydroretinal. The sequence is that of Rhodopsin, freshwater form from Anguilla anguilla (European freshwater eel).